The primary structure comprises 518 residues: Lycopene epsilon cyclase, chloroplastic (518 aa).

An NAD(+)-binding site is contributed by 100–128 (LIVIGCGPAGMSLAAEAGKRGLSVGLIGP). 2 helical membrane passes run 435–455 (FFLFGLALILQLDIDGIRIFF) and 469–489 (FLGSTLSSAGLIWFAFYMFAI).

Belongs to the lycopene cyclase family. In terms of tissue distribution, expressed in leaves and roots. Detected in flower buds and lips.

It localises to the plastid. The protein localises to the chloroplast membrane. It catalyses the reaction a carotenoid psi-end group = a carotenoid epsilon-end group. Its pathway is carotenoid biosynthesis; alpha-zeacarotene biosynthesis. It participates in carotenoid biosynthesis; delta-carotene biosynthesis. Catalyzes the single epsilon-cyclization reaction which converts lycopene to delta-carotene and neurosporene to alpha-zeacarotene. Required for lutein biosynthesis. This Oncidium hybrid cultivar (Orchid) protein is Lycopene epsilon cyclase, chloroplastic.